Here is a 353-residue protein sequence, read N- to C-terminus: D-alanine--D-alanine ligase A (353 aa).

In terms of domain architecture, ATP-grasp spans 141-346; it reads KRLVNEAGLS…YPEIINRLVA (206 aa). Position 169-224 (169-224) interacts with ATP; sequence EQALGLPIFIKPARQGSSVGVHKVVTEADYQAAMSDGFIYDDKLLAEEFIQAREVE. The Mg(2+) site is built by Asp-300, Glu-313, and Asn-315.

It belongs to the D-alanine--D-alanine ligase family. The cofactor is Mg(2+). Mn(2+) serves as cofactor.

The protein resides in the cytoplasm. It catalyses the reaction 2 D-alanine + ATP = D-alanyl-D-alanine + ADP + phosphate + H(+). It functions in the pathway cell wall biogenesis; peptidoglycan biosynthesis. In terms of biological role, cell wall formation. This is D-alanine--D-alanine ligase A from Brucella melitensis biotype 1 (strain ATCC 23456 / CCUG 17765 / NCTC 10094 / 16M).